A 290-amino-acid polypeptide reads, in one-letter code: Sodium/potassium-transporting ATPase subunit beta-2 (290 aa).

Residues 1-39 (MVIQKEKKSCGQVVEEWKEFVWNPRTHQFMGRTGTSWAF) lie on the Cytoplasmic side of the membrane. The chain crosses the membrane as a helical; Signal-anchor for type II membrane protein span at residues 40–67 (ILLFYLVFYGFLTAMFTLTMWVMLQTVS). At 68–290 (DHTPKYQDRL…VAFKLRINKA (223 aa)) the chain is on the extracellular side. Residues Asn-96 and Asn-118 are each glycosylated (N-linked (GlcNAc...) asparagine). Cys-129 and Cys-150 form a disulfide bridge. N-linked (GlcNAc...) asparagine glycans are attached at residues Asn-153 and Asn-159. Cys-160 and Cys-177 are disulfide-bonded. Residues Asn-193, Asn-197, and Asn-238 are each glycosylated (N-linked (GlcNAc...) asparagine). The interval 193-290 (NQSMNVTCVG…VAFKLRINKA (98 aa)) is immunoglobulin-like. Cys-200 and Cys-261 are joined by a disulfide.

It belongs to the X(+)/potassium ATPases subunit beta family. In terms of assembly, the sodium/potassium-transporting ATPase is composed of a catalytic alpha subunit, an auxiliary non-catalytic beta subunit and an additional regulatory subunit. Interacts with isoform 2 of BSG. As to expression, highly expressed in brain (at protein level).

The protein resides in the cell membrane. Functionally, this is the non-catalytic component of the active enzyme, which catalyzes the hydrolysis of ATP coupled with the exchange of Na(+) and K(+) ions across the plasma membrane. The exact function of the beta-2 subunit is not known. In terms of biological role, mediates cell adhesion of neurons and astrocytes, and promotes neurite outgrowth. This chain is Sodium/potassium-transporting ATPase subunit beta-2 (Atp1b2), found in Rattus norvegicus (Rat).